We begin with the raw amino-acid sequence, 146 residues long: Pseudoazurin (146 aa).

A signal peptide spans 1–23 (MRNIAIKFAAAGILAMLAAPALA). A Plastocyanin-like domain is found at 28–116 (VHMLNKGAEG…MGMIALIAVG (89 aa)). Positions 63, 101, 104, and 109 each coordinate Cu cation.

Cu cation is required as a cofactor.

It localises to the periplasm. Its function is as follows. This soluble electron transfer copper protein is required for the inactivation of copper-containing nitrite reductase in the presence of oxygen. Serves as a direct electron donor to the nitrite reductase. This Alcaligenes faecalis protein is Pseudoazurin.